A 555-amino-acid polypeptide reads, in one-letter code: Spermine oxidase (555 aa).

FAD is bound by residues alanine 35, glutamate 55, arginine 63, 79–80 (TW), and valine 261. Residues 271 to 307 (AHPRGPEIEPRGEGDHNHDTGEGGQSGENPQQGRWDE) are disordered. Positions 274–291 (RGPEIEPRGEGDHNHDTG) are enriched in basic and acidic residues. Residues glutamate 519 and 528–529 (TT) each bind FAD.

It belongs to the flavin monoamine oxidase family. The cofactor is FAD. In terms of tissue distribution, widely expressed. Isoform 1 and isoform 2 are expressed at higher level in brain and skeletal muscle. Isoform 7 is found in brain and spleen, isoform 10 is widely expressed but found at lower level in heart, kidney, liver and lung.

The protein localises to the cytoplasm. Its subcellular location is the nucleus. It catalyses the reaction spermine + O2 + H2O = 3-aminopropanal + spermidine + H2O2. Its pathway is amine and polyamine degradation; spermine degradation. In terms of biological role, flavoenzyme which catalyzes the oxidation of spermine to spermidine. Can also use N(1)-acetylspermine and spermidine as substrates, with different affinity depending on the isoform (isozyme) and on the experimental conditions. Plays an important role in the regulation of polyamine intracellular concentration and has the potential to act as a determinant of cellular sensitivity to the antitumor polyamine analogs. May contribute to beta-alanine production via aldehyde dehydrogenase conversion of 3-amino-propanal. The polypeptide is Spermine oxidase (Smox) (Mus musculus (Mouse)).